We begin with the raw amino-acid sequence, 378 residues long: GTP cyclohydrolase-2 (378 aa).

Residues 1 to 180 (MEEVSSHVKS…IKDMIEFRIK (180 aa)) form a DHBP synthase-like region. A GTP cyclohydrolase II region spans residues 181 to 378 (SEKIVERVIE…KMGHLICFND (198 aa)). Position 229–233 (229–233 (RIHSE)) interacts with GTP. Zn(2+)-binding residues include Cys234, Cys245, and Cys247. GTP-binding positions include Gln250, 273–275 (EGR), and Thr295. Catalysis depends on Asp307, which acts as the Proton acceptor. Residue Arg309 is the Nucleophile of the active site. 2 residues coordinate GTP: Thr330 and Lys335.

The protein in the N-terminal section; belongs to the DHBP synthase family. In the C-terminal section; belongs to the GTP cyclohydrolase II family. Requires Zn(2+) as cofactor.

It catalyses the reaction GTP + 4 H2O = 2,5-diamino-6-hydroxy-4-(5-phosphoribosylamino)-pyrimidine + formate + 2 phosphate + 3 H(+). Its pathway is cofactor biosynthesis; riboflavin biosynthesis; 5-amino-6-(D-ribitylamino)uracil from GTP: step 1/4. In terms of biological role, catalyzes the conversion of GTP to 2,5-diamino-6-ribosylamino-4(3H)-pyrimidinone 5'-phosphate (DARP), formate and pyrophosphate. In Archaeoglobus fulgidus (strain ATCC 49558 / DSM 4304 / JCM 9628 / NBRC 100126 / VC-16), this protein is GTP cyclohydrolase-2 (ribA).